The sequence spans 40 residues: Photosystem II reaction center protein J (40 aa).

Met2 is subject to N-acetylmethionine. At 2–11 the chain is on the cytoplasmic side; it reads MSEGGRIPLW. Residues 12-26 traverse the membrane as a helical segment; it reads IVATVAGMGVIVIVG. Residues 27-40 are Lumenal-facing; the sequence is LFFYGAYAGLGSSL.

It belongs to the PsbJ family. PSII is composed of 1 copy each of membrane proteins PsbA, PsbB, PsbC, PsbD, PsbE, PsbF, PsbH, PsbI, PsbJ, PsbK, PsbL, PsbM, PsbT, PsbX, PsbY, PsbZ, Psb30/Ycf12, peripheral proteins PsbO, CyanoQ (PsbQ), PsbU, PsbV and a large number of cofactors. It forms dimeric complexes. PSII binds multiple chlorophylls, carotenoids and specific lipids. serves as cofactor.

The protein resides in the cellular thylakoid membrane. One of the components of the core complex of photosystem II (PSII). PSII is a light-driven water:plastoquinone oxidoreductase that uses light energy to abstract electrons from H(2)O, generating O(2) and a proton gradient subsequently used for ATP formation. It consists of a core antenna complex that captures photons, and an electron transfer chain that converts photonic excitation into a charge separation. In terms of biological role, may play a regulatory role in PSII biogenesis. The sequence is that of Photosystem II reaction center protein J from Thermosynechococcus vestitus (strain NIES-2133 / IAM M-273 / BP-1).